The sequence spans 440 residues: 3-phosphoshikimate 1-carboxyvinyltransferase (440 aa).

3-phosphoshikimate-binding residues include K25, S26, and R30. Residue K25 participates in phosphoenolpyruvate binding. Positions 96 and 124 each coordinate phosphoenolpyruvate. 4 residues coordinate 3-phosphoshikimate: S168, Q169, D310, and K337. Residue Q169 participates in phosphoenolpyruvate binding. D310 (proton acceptor) is an active-site residue. 3 residues coordinate phosphoenolpyruvate: R341, R382, and K409.

The protein belongs to the EPSP synthase family. In terms of assembly, monomer.

It localises to the cytoplasm. The catalysed reaction is 3-phosphoshikimate + phosphoenolpyruvate = 5-O-(1-carboxyvinyl)-3-phosphoshikimate + phosphate. Its pathway is metabolic intermediate biosynthesis; chorismate biosynthesis; chorismate from D-erythrose 4-phosphate and phosphoenolpyruvate: step 6/7. Catalyzes the transfer of the enolpyruvyl moiety of phosphoenolpyruvate (PEP) to the 5-hydroxyl of shikimate-3-phosphate (S3P) to produce enolpyruvyl shikimate-3-phosphate and inorganic phosphate. The chain is 3-phosphoshikimate 1-carboxyvinyltransferase from Chlamydia trachomatis serovar D (strain ATCC VR-885 / DSM 19411 / UW-3/Cx).